The chain runs to 143 residues: Hemoglobin subunit alpha (143 aa).

N-acetylserine is present on Ser-2. One can recognise a Globin domain in the interval 2–143 (SLSDKDKSAV…VALALAEKYR (142 aa)). His-60 contributes to the O2 binding site. His-89 provides a ligand contact to heme b.

This sequence belongs to the globin family. Heterotetramer of two alpha chains and two beta chains. As to expression, red blood cells.

Involved in oxygen transport from gills to the various peripheral tissues. This is Hemoglobin subunit alpha (hba) from Pogonophryne scotti (Saddleback plunderfish).